A 722-amino-acid polypeptide reads, in one-letter code: Polyribonucleotide nucleotidyltransferase (722 aa).

Positions 495 and 501 each coordinate Mg(2+). The region spanning 562 to 621 is the KH domain; it reads PRLLSFRIDPELIGTVIGPGGRTIKGITERTNTKIDIEDGGIVTIASHDGAAAEEAQRII. The region spanning 631 to 699 is the S1 motif domain; it reads GEIFPGSITR…NRGRINLTLR (69 aa). The disordered stretch occupies residues 700-722; sequence GVSQNGGMSNYPEPTPTPVAPLT. The span at 712–722 shows a compositional bias: pro residues; sequence EPTPTPVAPLT.

This sequence belongs to the polyribonucleotide nucleotidyltransferase family. The cofactor is Mg(2+).

It is found in the cytoplasm. It carries out the reaction RNA(n+1) + phosphate = RNA(n) + a ribonucleoside 5'-diphosphate. Involved in mRNA degradation. Catalyzes the phosphorolysis of single-stranded polyribonucleotides processively in the 3'- to 5'-direction. In Prochlorococcus marinus (strain NATL1A), this protein is Polyribonucleotide nucleotidyltransferase.